Reading from the N-terminus, the 446-residue chain is Cyclin-T1-1 (446 aa).

The protein belongs to the cyclin family. Cyclin T subfamily.

The chain is Cyclin-T1-1 (CYCT1-1) from Oryza sativa subsp. japonica (Rice).